Reading from the N-terminus, the 159-residue chain is Ribosomal RNA large subunit methyltransferase H (159 aa).

Residues Leu-76, Gly-108, and 127 to 132 (FSKMTL) each bind S-adenosyl-L-methionine.

Belongs to the RNA methyltransferase RlmH family. In terms of assembly, homodimer.

The protein localises to the cytoplasm. The enzyme catalyses pseudouridine(1915) in 23S rRNA + S-adenosyl-L-methionine = N(3)-methylpseudouridine(1915) in 23S rRNA + S-adenosyl-L-homocysteine + H(+). Specifically methylates the pseudouridine at position 1915 (m3Psi1915) in 23S rRNA. The sequence is that of Ribosomal RNA large subunit methyltransferase H from Bacillus cereus (strain ATCC 14579 / DSM 31 / CCUG 7414 / JCM 2152 / NBRC 15305 / NCIMB 9373 / NCTC 2599 / NRRL B-3711).